The following is a 626-amino-acid chain: Probable potassium transport system protein Kup 3 (626 aa).

12 consecutive transmembrane segments (helical) span residues 10–30, 51–71, 107–127, 141–161, 173–193, 216–236, 251–271, 293–313, 341–361, 371–391, 401–421, and 423–443; these read LATL…TSPL, VLGI…LKYV, VLLG…TPAI, PAFK…LFIF, FGPV…AAIV, LLGF…EALY, WLGY…ALLL, LVAL…SGAF, IYLP…VIEF, YGIA…AVAV, AMLG…ANSV, and IADG…LLTT.

It belongs to the HAK/KUP transporter (TC 2.A.72) family.

The protein localises to the cell inner membrane. The catalysed reaction is K(+)(in) + H(+)(in) = K(+)(out) + H(+)(out). Functionally, transport of potassium into the cell. Likely operates as a K(+):H(+) symporter. The polypeptide is Probable potassium transport system protein Kup 3 (Dechloromonas aromatica (strain RCB)).